Consider the following 115-residue polypeptide: MSMDNLIRIIEKDQVKEVPEFRPGDTVRVYVKFKEGNKERTQAFEGIVISLRGSGVGKTFTVRRIGANGIGVERIFPLYAPIIEKIEVVRRGKVRRAKLYYLRNIRGKVKIKERR.

This sequence belongs to the bacterial ribosomal protein bL19 family.

This protein is located at the 30S-50S ribosomal subunit interface and may play a role in the structure and function of the aminoacyl-tRNA binding site. The polypeptide is Large ribosomal subunit protein bL19 (Thermosipho melanesiensis (strain DSM 12029 / CIP 104789 / BI429)).